The sequence spans 210 residues: MARYIGPKCKLSRREGTDLFLKSGIRPLESKCKADQAPGQAAGASGRRPARLSDYGVQLREKQKVRRTYGVLEKQFRSYYKKAAASKGATGEVLLQLLEGRLDNVVYRMGFGSTRSEARQLVSHRAILVNGQSVNVASYQVKPGDQINVREKSKNQLRVKNAMELAQQRGFMPWIEVDDKKLEGTYKAKPERIDLPAEINENLIVELYSK.

In terms of domain architecture, S4 RNA-binding spans 100-160 (GRLDNVVYRM…EKSKNQLRVK (61 aa)).

It belongs to the universal ribosomal protein uS4 family. Part of the 30S ribosomal subunit. Contacts protein S5. The interaction surface between S4 and S5 is involved in control of translational fidelity.

In terms of biological role, one of the primary rRNA binding proteins, it binds directly to 16S rRNA where it nucleates assembly of the body of the 30S subunit. Its function is as follows. With S5 and S12 plays an important role in translational accuracy. The protein is Small ribosomal subunit protein uS4 of Alcanivorax borkumensis (strain ATCC 700651 / DSM 11573 / NCIMB 13689 / SK2).